Reading from the N-terminus, the 376-residue chain is tRNA 2-selenouridine synthase (376 aa).

Positions Phe-15–Glu-138 constitute a Rhodanese domain. Cys-98 functions as the S-selanylcysteine intermediate in the catalytic mechanism.

It belongs to the SelU family. Monomer.

It catalyses the reaction 5-methylaminomethyl-2-thiouridine(34) in tRNA + selenophosphate + (2E)-geranyl diphosphate + H2O + H(+) = 5-methylaminomethyl-2-selenouridine(34) in tRNA + (2E)-thiogeraniol + phosphate + diphosphate. The enzyme catalyses 5-methylaminomethyl-2-thiouridine(34) in tRNA + (2E)-geranyl diphosphate = 5-methylaminomethyl-S-(2E)-geranyl-thiouridine(34) in tRNA + diphosphate. It carries out the reaction 5-methylaminomethyl-S-(2E)-geranyl-thiouridine(34) in tRNA + selenophosphate + H(+) = 5-methylaminomethyl-2-(Se-phospho)selenouridine(34) in tRNA + (2E)-thiogeraniol. The catalysed reaction is 5-methylaminomethyl-2-(Se-phospho)selenouridine(34) in tRNA + H2O = 5-methylaminomethyl-2-selenouridine(34) in tRNA + phosphate. Involved in the post-transcriptional modification of the uridine at the wobble position (U34) of tRNA(Lys), tRNA(Glu) and tRNA(Gln). Catalyzes the conversion of 2-thiouridine (S2U-RNA) to 2-selenouridine (Se2U-RNA). Acts in a two-step process involving geranylation of 2-thiouridine (S2U) to S-geranyl-2-thiouridine (geS2U) and subsequent selenation of the latter derivative to 2-selenouridine (Se2U) in the tRNA chain. This Shewanella oneidensis (strain ATCC 700550 / JCM 31522 / CIP 106686 / LMG 19005 / NCIMB 14063 / MR-1) protein is tRNA 2-selenouridine synthase.